The primary structure comprises 350 residues: Protein-glutamate methylesterase/protein-glutamine glutaminase (350 aa).

Positions 5–122 (KVLCVDDSAL…RDGLIEYSEV (118 aa)) constitute a Response regulatory domain. Aspartate 56 bears the 4-aspartylphosphate mark. The CheB-type methylesterase domain occupies 152–346 (PFASSEKLVI…ERILTRLGDR (195 aa)). Residues serine 165, histidine 191, and aspartate 288 contribute to the active site.

Belongs to the CheB family. In terms of processing, phosphorylated by CheA. Phosphorylation of the N-terminal regulatory domain activates the methylesterase activity.

The protein localises to the cytoplasm. It catalyses the reaction [protein]-L-glutamate 5-O-methyl ester + H2O = L-glutamyl-[protein] + methanol + H(+). It carries out the reaction L-glutaminyl-[protein] + H2O = L-glutamyl-[protein] + NH4(+). In terms of biological role, involved in chemotaxis. Part of a chemotaxis signal transduction system that modulates chemotaxis in response to various stimuli. Catalyzes the demethylation of specific methylglutamate residues introduced into the chemoreceptors (methyl-accepting chemotaxis proteins or MCP) by CheR. Also mediates the irreversible deamidation of specific glutamine residues to glutamic acid. The protein is Protein-glutamate methylesterase/protein-glutamine glutaminase of Bordetella bronchiseptica (strain ATCC BAA-588 / NCTC 13252 / RB50) (Alcaligenes bronchisepticus).